The following is a 642-amino-acid chain: MPVITITNGLQLTFQKPVSSLEIAKYISSNCEQNCIASYLNNRLVDAVDLIMQDSKLDIITAEDKAGLDILRCSCNHLLGHAIKQLWPEAKMTIGKIIDKGFYYDIDLEHKLQPEDIDALEKCMHTLANKNYNIVKKYVSWQQAREIFQANGEIYKVAILDDNINQHTLVALYYYEEYVDMCRGPHAPNIRFCHHFKLQKTSITYWRNNDKNKKLQRIYGTAWGTDMQLKCYLQSLQEVKKRDHRKIGQQLDLYHIQEEAPGMVFWHVDGWIIFRELETFIRSKLQTYKYQEVKSPVMIDRTLWEQTGHWSNYAEHIFTTSSENREYCIKPMNCPGHVQIFNQQINSYRDLPLRMAEFGSCYRNEPSGSLHGLMRVRNFTQDDAHIFCTEEQVCDEINNNIKMLYEVYHTFGFKKILVNLSTRPAHRIGNDKIWDKAEQDLATTLTNNGILFKYNVGAGAFYGPKIEFTLLDSFDRAWQCGTIQLDFSLPSRLKAFYINKNNQRLVPVMIHRAILGSLERFIGILIEEYAGFFPTWLAPTQVVLMNISDNQSNYVIQLMQKLSTANIRAKIDLRNEKIGFKIREHTLRRVPYMLICGDQEIKMGKVTIRTRYGKNLGMFEMNNFIEKLQHEINHRNLSQIEK.

The region spanning 1–61 is the TGS domain; that stretch reads MPVITITNGL…MQDSKLDIIT (61 aa). Positions 243–534 are catalytic; it reads DHRKIGQQLD…LIEEYAGFFP (292 aa). Zn(2+) contacts are provided by Cys-334, His-385, and His-511.

The protein belongs to the class-II aminoacyl-tRNA synthetase family. Homodimer. Requires Zn(2+) as cofactor.

The protein resides in the cytoplasm. It catalyses the reaction tRNA(Thr) + L-threonine + ATP = L-threonyl-tRNA(Thr) + AMP + diphosphate + H(+). Catalyzes the attachment of threonine to tRNA(Thr) in a two-step reaction: L-threonine is first activated by ATP to form Thr-AMP and then transferred to the acceptor end of tRNA(Thr). Also edits incorrectly charged L-seryl-tRNA(Thr). This is Threonine--tRNA ligase from Baumannia cicadellinicola subsp. Homalodisca coagulata.